The chain runs to 227 residues: Cytidylate kinase (227 aa).

12–20 serves as a coordination point for ATP; sequence GPSGAGKGT.

The protein belongs to the cytidylate kinase family. Type 1 subfamily.

It localises to the cytoplasm. It carries out the reaction CMP + ATP = CDP + ADP. The catalysed reaction is dCMP + ATP = dCDP + ADP. The chain is Cytidylate kinase from Xanthomonas euvesicatoria pv. vesicatoria (strain 85-10) (Xanthomonas campestris pv. vesicatoria).